Here is a 161-residue protein sequence, read N- to C-terminus: Fatty acid-binding protein homolog 2 (161 aa).

The N-terminal stretch at 1 to 19 (MSSKFLILLAFCGATLVAA) is a signal peptide.

It belongs to the calycin superfamily. Fatty-acid binding protein (FABP) family.

It localises to the secreted. May play a role in sequestering potentially toxic fatty acids and their peroxidation products, or it may be involved in the maintenance of the impermeable lipid layer of the eggshell. This Caenorhabditis elegans protein is Fatty acid-binding protein homolog 2 (lbp-2).